Consider the following 465-residue polypeptide: Dihydrolipoyl dehydrogenase (465 aa).

FAD is bound by residues 34-42 (EEREAGGTC), K51, and G114. Cysteines 42 and 47 form a disulfide. NAD(+)-binding positions include 180–184 (GGGVI), E203, V237, and 264–267 (SIGR). FAD contacts are provided by D307 and A315. Catalysis depends on H439, which acts as the Proton acceptor.

This sequence belongs to the class-I pyridine nucleotide-disulfide oxidoreductase family. FAD serves as cofactor.

The protein localises to the cytoplasm. The catalysed reaction is N(6)-[(R)-dihydrolipoyl]-L-lysyl-[protein] + NAD(+) = N(6)-[(R)-lipoyl]-L-lysyl-[protein] + NADH + H(+). Its function is as follows. The branched-chain alpha-keto dehydrogenase complex catalyzes the overall conversion of alpha-keto acids to acyl-CoA and CO(2). It contains multiple copies of 3 enzymatic components: branched-chain alpha-keto acid decarboxylase (E1), lipoamide acyltransferase (E2) and lipoamide dehydrogenase (E3). The chain is Dihydrolipoyl dehydrogenase (lpdA) from Chlamydia muridarum (strain MoPn / Nigg).